Reading from the N-terminus, the 406-residue chain is Histone-lysine N-methyltransferase SUV39H2 (406 aa).

Residues 43–101 (YEVEYLCDYRIEKGVEKFFVKWKGWPESCNTWEPTRNLKCPTLLKQFYSDLYNYFCALK) form the Chromo domain. Positions 185 to 243 (VGCDCSDCFKGKCCPTEAGVLFAYNEHRQIKIPPGRPIYECNSRCKCGPDCPNRVVQKG) constitute a Pre-SET domain. Zn(2+) contacts are provided by C187, C189, C192, C197, C198, C225, C229, C231, and C235. The SET domain occupies 246–369 (YSLCIFRTDN…AGEELTFDYQ (124 aa)). S-adenosyl-L-methionine is bound by residues 257–259 (RGW), Y300, and 326–327 (NH). 4 residues coordinate Zn(2+): C329, C394, C396, and C401. A Post-SET domain is found at 390 to 406 (VRIACKCGAATCRGYLN).

Belongs to the class V-like SAM-binding methyltransferase superfamily. Histone-lysine methyltransferase family. Suvar3-9 subfamily.

The protein localises to the nucleus. It is found in the chromosome. It localises to the centromere. It catalyses the reaction L-lysyl(9)-[histone H3] + 3 S-adenosyl-L-methionine = N(6),N(6),N(6)-trimethyl-L-lysyl(9)-[histone H3] + 3 S-adenosyl-L-homocysteine + 3 H(+). Histone methyltransferase that specifically trimethylates 'Lys-9' of histone H3 using monomethylated H3 'Lys-9' as substrate. H3 'Lys-9' trimethylation represents a specific tag for epigenetic transcriptional repression by recruiting HP1 (CBX1, CBX3 and/or CBX5) proteins to methylated histones. Mainly functions in heterochromatin regions, thereby playing a central role in the establishment of constitutive heterochromatin at pericentric and telomere regions. H3 'Lys-9' trimethylation is also required to direct DNA methylation at pericentric repeats. SUV39H1 is targeted to histone H3 via its interaction with RB1 and is involved in many processes. The chain is Histone-lysine N-methyltransferase SUV39H2 (suv39h2) from Xenopus tropicalis (Western clawed frog).